The sequence spans 293 residues: MKKILAFLSIAAGSTLFFVFLFIFLSKVFSGEILLSRYIFRIGGFELRWYSTLILTGFLISYFVARKRAKNEGINLEEFDELIFYGVIAGIVGARLYYVLFNLKYYRSLWDALKIWEGGLAIHGAVIGALLTGFLYVRLKKPSFTFLQATDLFTSVLPLGQAIGRWGNFFNYEAFGVPTNLPWKMFVPEPYRPVVYKDYSFFHPTFLYESIWDLLVFFMLSVYFKRYRKRHGEVTCLYFVLYSLGRIVIERLRVDSLMIGNIKAAQLLSAVLILLGFTGFLILRSSQEPKRAF.

4 helical membrane-spanning segments follow: residues 4–24 (ILAF…LFIF), 45–65 (FELR…YFVA), 81–101 (ELIF…YVLF), and 115–135 (IWEG…TGFL). Residue R165 participates in a 1,2-diacyl-sn-glycero-3-phospho-(1'-sn-glycerol) binding. 3 helical membrane passes run 204–224 (PTFL…SVYF), 231–249 (HGEV…RIVI), and 262–282 (IKAA…GFLI).

This sequence belongs to the Lgt family.

It is found in the cell inner membrane. It carries out the reaction L-cysteinyl-[prolipoprotein] + a 1,2-diacyl-sn-glycero-3-phospho-(1'-sn-glycerol) = an S-1,2-diacyl-sn-glyceryl-L-cysteinyl-[prolipoprotein] + sn-glycerol 1-phosphate + H(+). It functions in the pathway protein modification; lipoprotein biosynthesis (diacylglyceryl transfer). Its function is as follows. Catalyzes the transfer of the diacylglyceryl group from phosphatidylglycerol to the sulfhydryl group of the N-terminal cysteine of a prolipoprotein, the first step in the formation of mature lipoproteins. This is Phosphatidylglycerol--prolipoprotein diacylglyceryl transferase from Thermotoga petrophila (strain ATCC BAA-488 / DSM 13995 / JCM 10881 / RKU-1).